The following is a 929-amino-acid chain: von Willebrand factor C and EGF domain-containing protein (929 aa).

Residues 1 to 21 (MWARLLLHVAYILIPLLGSSA) form the signal peptide. Residues 70-98 (LCSFGCGSGICIAPNVCSCQDGEQGATCP) form the EGF-like 1 domain. The EGF-like 2; calcium-binding domain maps to 142–180 (DIDECLSSSCEGHCVNTEGGFVCECGPGMQLSADRHSCQ). Intrachain disulfides connect cysteine 146–cysteine 155, cysteine 151–cysteine 164, cysteine 166–cysteine 179, cysteine 185–cysteine 194, cysteine 190–cysteine 203, cysteine 205–cysteine 218, cysteine 224–cysteine 237, cysteine 233–cysteine 246, and cysteine 248–cysteine 261. The region spanning 181 to 219 (DTDECLGTPCQQRCKNSIGSYKCSCRAGFHLHGNRHSCI) is the EGF-like 3; calcium-binding domain. The EGF-like 4; calcium-binding domain maps to 220-262 (DVNECRRPQERRVCHHTCHNTVGSFLCTCRPGFRLRSDRVSCE). Disordered regions lie at residues 291–317 (AGRP…RTIS) and 339–374 (PSSS…LGAG). Residues 339–353 (PSSSPLGTLGPPSLL) are compositionally biased toward low complexity. 6 VWFC domains span residues 376 to 433 (SSCW…PSCT), 433 to 494 (TGCF…GRCY), 491 to 552 (GRCY…FTCR), 558 to 618 (TGCS…PDCS), 619 to 677 (AGCT…PVCH), and 677 to 762 (HDCN…VNCS). N-linked (GlcNAc...) asparagine glycans are attached at residues asparagine 454 and asparagine 464. The tract at residues 731–774 (PLEEKQQPSPHGELAKAARNARGDTEVPVNCSSCPGPPSASPTR) is disordered. The span at 743-755 (ELAKAARNARGDT) shows a compositional bias: basic and acidic residues. N-linked (GlcNAc...) asparagine glycosylation is present at asparagine 787. A compositionally biased stretch (polar residues) spans 791–807 (IQSASPSPPIAQTSSSP). 2 disordered regions span residues 791–861 (IQSA…SSTF) and 879–929 (AETP…NSTI). Residues 889–903 (LSETLTTSSSSQRLS) show a composition bias toward low complexity.

Its subcellular location is the secreted. Its function is as follows. May be a regulatory element in the beta-catenin signaling pathway and a target for chemoprevention of hapatocellular carcinoma. The polypeptide is von Willebrand factor C and EGF domain-containing protein (Vwce) (Mus musculus (Mouse)).